We begin with the raw amino-acid sequence, 215 residues long: Ribose-5-phosphate isomerase A (215 aa).

Residues 26 to 29, 79 to 82, and 92 to 95 contribute to the substrate site; these read TGST, DGAD, and KGGG. The active-site Proton acceptor is Glu101. Position 119 (Lys119) interacts with substrate.

It belongs to the ribose 5-phosphate isomerase family. In terms of assembly, homodimer.

It carries out the reaction aldehydo-D-ribose 5-phosphate = D-ribulose 5-phosphate. It participates in carbohydrate degradation; pentose phosphate pathway; D-ribose 5-phosphate from D-ribulose 5-phosphate (non-oxidative stage): step 1/1. Functionally, catalyzes the reversible conversion of ribose-5-phosphate to ribulose 5-phosphate. The polypeptide is Ribose-5-phosphate isomerase A (Stenotrophomonas maltophilia (strain K279a)).